The primary structure comprises 365 residues: tRNA-specific 2-thiouridylase MnmA (365 aa).

ATP is bound by residues 12 to 19 (AMSGGVDS) and Met-38. Residue Cys-108 is the Nucleophile of the active site. Cys-108 and Cys-206 are disulfide-bonded. Gly-132 provides a ligand contact to ATP. Residues 156–158 (KDQ) form an interaction with tRNA region. Cys-206 (cysteine persulfide intermediate) is an active-site residue. The segment at 312–313 (RY) is interaction with tRNA.

This sequence belongs to the MnmA/TRMU family.

It localises to the cytoplasm. The catalysed reaction is S-sulfanyl-L-cysteinyl-[protein] + uridine(34) in tRNA + AH2 + ATP = 2-thiouridine(34) in tRNA + L-cysteinyl-[protein] + A + AMP + diphosphate + H(+). In terms of biological role, catalyzes the 2-thiolation of uridine at the wobble position (U34) of tRNA, leading to the formation of s(2)U34. The polypeptide is tRNA-specific 2-thiouridylase MnmA (Carboxydothermus hydrogenoformans (strain ATCC BAA-161 / DSM 6008 / Z-2901)).